Here is a 464-residue protein sequence, read N- to C-terminus: E3 ubiquitin-protein ligase ITT1 (464 aa).

The TRIAD supradomain stretch occupies residues 176 to 455 (SNYHCCICME…EAYSGCYGRL (280 aa)). 10 residues coordinate Zn(2+): cysteine 180, cysteine 183, cysteine 207, cysteine 210, cysteine 290, cysteine 300, cysteine 316, cysteine 319, cysteine 402, and cysteine 405. An RING-type 1 zinc finger spans residues 180–236 (CCICMEMEKGVRMIKLPCENANVEHYLCRGCAKSYFTAMIQENRISSVRCPQCEYKE). Residues 267–338 (DTELCERYEK…HAWHGYNNKC (72 aa)) form an IBR-type zinc finger. Residues 402-431 (CPKCKVVVERSEGCNKMKCEVCGTLFCFIC) form an RING-type 2; atypical zinc finger. The active site involves cysteine 415. Zn(2+)-binding residues include cysteine 420, cysteine 423, cysteine 428, cysteine 431, histidine 443, and cysteine 451.

This sequence belongs to the RBR family. RNF14 subfamily. As to quaternary structure, interacts with translation release factors eRF1 (SUP45) and eRF3 (SUP35) in vitro.

It catalyses the reaction [E2 ubiquitin-conjugating enzyme]-S-ubiquitinyl-L-cysteine + [acceptor protein]-L-lysine = [E2 ubiquitin-conjugating enzyme]-L-cysteine + [acceptor protein]-N(6)-ubiquitinyl-L-lysine.. It functions in the pathway protein modification; protein ubiquitination. Its function is as follows. E3 ubiquitin-protein ligase involved in translation quality control. Involved in the rescue of stalled ribosomes by promoting ubiquitination and degradation of proteins on stalled ribosomes. Specifically required to resolve RNA-protein cross-links caused by reactive aldehydes, which trigger translation stress by stalling ribosomes: acts by catalying 'Lys-6'-linked ubiquitination of RNA-protein cross-links, leading to their degradation. Interacts with the translation termination factors eRF1 (SUP45) and eRF3 (SUP35); overexpression decreases the efficiency of translation termination. The sequence is that of E3 ubiquitin-protein ligase ITT1 from Saccharomyces cerevisiae (strain ATCC 204508 / S288c) (Baker's yeast).